The primary structure comprises 165 residues: HTH-type transcriptional regulator IscR (165 aa).

Residues 2-131 (RLTSKGRYAV…NNITLAELVN (130 aa)) enclose the HTH rrf2-type domain. The H-T-H motif DNA-binding region spans 28 to 51 (LADISERQGISLSYLEQLFSRLRK). Positions 92, 98, and 104 each coordinate [2Fe-2S] cluster.

[2Fe-2S] cluster serves as cofactor.

Regulates the transcription of several operons and genes involved in the biogenesis of Fe-S clusters and Fe-S-containing proteins. The chain is HTH-type transcriptional regulator IscR from Erwinia tasmaniensis (strain DSM 17950 / CFBP 7177 / CIP 109463 / NCPPB 4357 / Et1/99).